Here is a 163-residue protein sequence, read N- to C-terminus: D-aminoacyl-tRNA deacylase (163 aa).

The Gly-cisPro motif, important for rejection of L-amino acids signature appears at 141–142; the sequence is GP.

It belongs to the DTD family. As to quaternary structure, homodimer.

The protein resides in the cytoplasm. It catalyses the reaction glycyl-tRNA(Ala) + H2O = tRNA(Ala) + glycine + H(+). The enzyme catalyses a D-aminoacyl-tRNA + H2O = a tRNA + a D-alpha-amino acid + H(+). Its function is as follows. An aminoacyl-tRNA editing enzyme that deacylates mischarged D-aminoacyl-tRNAs. Also deacylates mischarged glycyl-tRNA(Ala), protecting cells against glycine mischarging by AlaRS. Acts via tRNA-based rather than protein-based catalysis; rejects L-amino acids rather than detecting D-amino acids in the active site. By recycling D-aminoacyl-tRNA to D-amino acids and free tRNA molecules, this enzyme counteracts the toxicity associated with the formation of D-aminoacyl-tRNA entities in vivo and helps enforce protein L-homochirality. In Neisseria meningitidis serogroup A / serotype 4A (strain DSM 15465 / Z2491), this protein is D-aminoacyl-tRNA deacylase.